Reading from the N-terminus, the 264-residue chain is Endonuclease V (264 aa).

2 residues coordinate Mg(2+): aspartate 72 and aspartate 137.

It belongs to the endonuclease V family. The cofactor is Mg(2+).

The protein resides in the cytoplasm. The enzyme catalyses Endonucleolytic cleavage at apurinic or apyrimidinic sites to products with a 5'-phosphate.. Its function is as follows. DNA repair enzyme involved in the repair of deaminated bases. Selectively cleaves double-stranded DNA at the second phosphodiester bond 3' to a deoxyinosine leaving behind the intact lesion on the nicked DNA. This Halobacterium salinarum (strain ATCC 700922 / JCM 11081 / NRC-1) (Halobacterium halobium) protein is Endonuclease V.